The chain runs to 184 residues: MQTTIRGELVEPYAEALLSLAQSHNLADQFQQDSGLILDLLAASAELQEFLANPLINPDAKKNVLRQLTVDKVHGYFLNFLMLLVDRRRINLLAAICQQYRALLRKLRNIVLAEVISAVELTEQQRHAVVEKVKTMTGAADVELAIAIDPELLGGVVIKVGSQIFDASLRGQLRRLSVSLAQPV.

This sequence belongs to the ATPase delta chain family. In terms of assembly, F-type ATPases have 2 components, F(1) - the catalytic core - and F(0) - the membrane proton channel. F(1) has five subunits: alpha(3), beta(3), gamma(1), delta(1), epsilon(1). CF(0) has four main subunits: a(1), b(1), b'(1) and c(10-14). The alpha and beta chains form an alternating ring which encloses part of the gamma chain. F(1) is attached to F(0) by a central stalk formed by the gamma and epsilon chains, while a peripheral stalk is formed by the delta, b and b' chains.

It localises to the cellular thylakoid membrane. F(1)F(0) ATP synthase produces ATP from ADP in the presence of a proton or sodium gradient. F-type ATPases consist of two structural domains, F(1) containing the extramembraneous catalytic core and F(0) containing the membrane proton channel, linked together by a central stalk and a peripheral stalk. During catalysis, ATP synthesis in the catalytic domain of F(1) is coupled via a rotary mechanism of the central stalk subunits to proton translocation. Functionally, this protein is part of the stalk that links CF(0) to CF(1). It either transmits conformational changes from CF(0) to CF(1) or is implicated in proton conduction. This is ATP synthase subunit delta from Synechococcus sp. (strain PCC 6716).